The sequence spans 64 residues: Long neurotoxin MS2 (64 aa).

5 disulfide bridges follow: Cys-3/Cys-24, Cys-6/Cys-11, Cys-17/Cys-41, Cys-45/Cys-57, and Cys-58/Cys-63.

This sequence belongs to the three-finger toxin family. Ancestral subfamily. Expressed by the venom gland.

Its subcellular location is the secreted. Produces peripheral paralysis by blocking neuromuscular transmission at the postsynaptic site. Very weak inhibitor of the endogenous nicotinic acetylcholine receptors (nAChR) in the human rhabdomyosarcoma TE 671 cell line. Not toxic to mice by intraperitoneal injection or to zebrafish by injection at the back of the dorsolateral region. The protein is Long neurotoxin MS2 of Micrurus surinamensis (Surinam coral snake).